The following is a 180-amino-acid chain: Iron sulfur cluster assembly protein 1, mitochondrial (180 aa).

It belongs to the NifU family. Component of the core Fe-S cluster (ISC) assembly machinery. The cofactor is [2Fe-2S] cluster.

It localises to the mitochondrion matrix. The protein operates within cofactor biosynthesis; iron-sulfur cluster biosynthesis. Its function is as follows. Scaffold protein for the de novo synthesis of iron-sulfur (Fe-S) clusters within mitochondria, which is required for maturation of both mitochondrial and cytoplasmic [2Fe-2S] and [4Fe-4S] proteins. First, a [2Fe-2S] cluster is transiently assembled on the scaffold protein ISU1. In a second step, the cluster is released from ISU1, transferred to a glutaredoxin, followed by the formation of mitochondrial [2Fe-2S] proteins, the synthesis of [4Fe-4S] clusters and their target-specific insertion into the recipient apoproteins. Cluster assembly on ISU1 depends on the function of the cysteine desulfurase complex NFS1-ISD11, which serves as the sulfur donor for cluster synthesis, the iron-binding protein frataxin as the putative iron donor, and the electron transfer chain comprised of ferredoxin reductase and ferredoxin, which receive their electrons from NADH. The polypeptide is Iron sulfur cluster assembly protein 1, mitochondrial (ISU1) (Kluyveromyces lactis (strain ATCC 8585 / CBS 2359 / DSM 70799 / NBRC 1267 / NRRL Y-1140 / WM37) (Yeast)).